A 115-amino-acid polypeptide reads, in one-letter code: Large ribosomal subunit protein bL20 (115 aa).

It belongs to the bacterial ribosomal protein bL20 family.

In terms of biological role, binds directly to 23S ribosomal RNA and is necessary for the in vitro assembly process of the 50S ribosomal subunit. It is not involved in the protein synthesizing functions of that subunit. The sequence is that of Large ribosomal subunit protein bL20 (rplT) from Borreliella burgdorferi (strain ATCC 35210 / DSM 4680 / CIP 102532 / B31) (Borrelia burgdorferi).